A 971-amino-acid chain; its full sequence is MEGSTGFDGDATTFFAPDAVFGDRVRRFQEFLDTFTSYRDSVRSIQVYNSNNAANYNDDQDDADERDLLGDDDGDDLEKEKKAASSTSLNILPHRIIISLDDLREFDRSFWSGILVEPAYFIPPAEKALTDLADSMDDVPHPNASAVSSRHPWKLSFKGSFGAHALSPRTLTAQHLNKLVSVEGIVTKTSLVRPKLIRSVHYAAKTGRFHYRDYTDATTTLTTRIPTPAIYPTEDTEGNKLTTEYGYSTFIDHQRITVQEMPEMAPAGQLPRSIDVILDDDLVDKTKPGDRVNVVGVFKSLGAGGMNQSNSNTLIGFKTLILGNTVYPLHARSTGVAARQMLTDFDIRNINKLSKKKDIFDILSQSLAPSIYGHDHIKKAILLMLMGGVEKNLENGSHLRGDINILMVGDPSTAKSQLLRFVLNTASLAIATTGRGSSGVGLTAAVTTDRETGERRLEAGAMVLADRGVVCIDEFDKMTDVDRVAIHEVMEQQTVTIAKAGIHTTLNARCSVIAAANPVFGQYDVNRDPHQNIALPDSLLSRFDLLFVVTDDINEIRDRSISEHVLRTHRYLPPGYLEGEPVRERLNLSLAVGEDADINPEEHSNSGAGVENEGEDDEDHVFEKFNPLLQAGAKLAKNKGNYNGTEIPKLVTIPFLRKYVQYAKERVIPQLTQEAINVIVKNYTDLRNDDNTKKSPITARTLETLIRLATAHAKVRLSKTVNKVDAKVAANLLRFALLGEDIGNDIDEEESEYEEALSKRSPQKSPKKRQRVRQPASNSGSPIKSTPRRSTASSVNATPSSARRILRFQDDEQNAGEDDNDIMSPLPADEEAELQRRLQLGLRVSPRRREHLHAPEEGSSGPLTEVGTPRLPNVSSAGQDDEQQQSVISFDNVEPGTISTGRLSLISGIIARLMQTEIFEEESYPVASLFERINEELPEEEKFSAQEYLAGLKIMSDRNNLMVADDKVWRV.

Positions Asn-52–Glu-78 are disordered. The segment covering Asp-58–Leu-77 has biased composition (acidic residues). The MCM domain occupies Ile-359 to Leu-566. ATP is bound at residue Gly-409–Ser-416. An Arginine finger motif is present at residues Ser-541–Asp-544. Disordered regions lie at residues Glu-594–Gly-614, Glu-749–Pro-825, and Leu-842–Val-893. Residues Ser-761, Ser-777, and Ser-781 each carry the phosphoserine modification. Residues Ser-761 to Val-772 show a composition bias toward basic residues. Positions Pro-775–Ser-801 are enriched in polar residues. Over residues Asp-811–Asp-821 the composition is skewed to acidic residues. Thr-868 is subject to Phosphothreonine. Residues Asn-873–Ser-889 are compositionally biased toward polar residues.

The protein belongs to the MCM family. As to quaternary structure, component of the MCM2-7 complex. The complex forms a toroidal hexameric ring with the proposed subunit order MCM2-MCM6-MCM4-MCM7-MCM3-MCM5; loaded onto DNA, forms a head-head double hexamer. Interacts with CSM1.

Its subcellular location is the nucleus. It catalyses the reaction ATP + H2O = ADP + phosphate + H(+). In terms of biological role, acts as a component of the MCM2-7 complex (MCM complex) which is the putative replicative helicase essential for 'once per cell cycle' DNA replication initiation and elongation in eukaryotic cells. The active ATPase sites in the MCM2-7 ring are formed through the interaction surfaces of two neighboring subunits such that a critical structure of a conserved arginine finger motif is provided in trans relative to the ATP-binding site of the Walker A box of the adjacent subunit. The six ATPase active sites, however, are likely to contribute differentially to the complex helicase activity. Once loaded onto DNA, double hexamers can slide on dsDNA in the absence of ATPase activity. Necessary for cell growth. This is DNA replication licensing factor MCM3 (MCM3) from Saccharomyces cerevisiae (strain ATCC 204508 / S288c) (Baker's yeast).